Consider the following 141-residue polypeptide: Large ribosomal subunit protein uL11 (141 aa).

This sequence belongs to the universal ribosomal protein uL11 family. As to quaternary structure, part of the ribosomal stalk of the 50S ribosomal subunit. Interacts with L10 and the large rRNA to form the base of the stalk. L10 forms an elongated spine to which L12 dimers bind in a sequential fashion forming a multimeric L10(L12)X complex. Post-translationally, one or more lysine residues are methylated.

In terms of biological role, forms part of the ribosomal stalk which helps the ribosome interact with GTP-bound translation factors. The chain is Large ribosomal subunit protein uL11 from Maridesulfovibrio salexigens (strain ATCC 14822 / DSM 2638 / NCIMB 8403 / VKM B-1763) (Desulfovibrio salexigens).